Here is a 383-residue protein sequence, read N- to C-terminus: tRNA-specific 2-thiouridylase MnmA (383 aa).

ATP contacts are provided by residues 16–23 and L42; that span reads AMSGGVDS. Catalysis depends on C110, which acts as the Nucleophile. Cysteines 110 and 209 form a disulfide. Residue G134 coordinates ATP. Residues 159–161 are interaction with tRNA; the sequence is KDQ. The active-site Cysteine persulfide intermediate is the C209.

Belongs to the MnmA/TRMU family.

The protein localises to the cytoplasm. It catalyses the reaction S-sulfanyl-L-cysteinyl-[protein] + uridine(34) in tRNA + AH2 + ATP = 2-thiouridine(34) in tRNA + L-cysteinyl-[protein] + A + AMP + diphosphate + H(+). Catalyzes the 2-thiolation of uridine at the wobble position (U34) of tRNA, leading to the formation of s(2)U34. The protein is tRNA-specific 2-thiouridylase MnmA of Caulobacter vibrioides (strain ATCC 19089 / CIP 103742 / CB 15) (Caulobacter crescentus).